We begin with the raw amino-acid sequence, 1234 residues long: Formin-like protein 3 (1234 aa).

Positions 1-208 (MRLDSFPASI…QYVARRNISP (208 aa)) constitute a Phosphatase tensin-type domain. Cys-141 serves as the catalytic Phosphocysteine intermediate. The region spanning 214–352 (ERALSFDCLI…FRAEMLFCEL (139 aa)) is the C2 tensin-type domain. Disordered regions lie at residues 443–478 (DSDE…NINH) and 492–840 (LVNT…LKPL). The span at 498 to 507 (VLPPTTPPPC) shows a compositional bias: pro residues. The segment covering 524-534 (VQHESPSDRKL) has biased composition (basic and acidic residues). Composition is skewed to pro residues over residues 536 to 576 (SPSP…PPLP), 584 to 656 (QPPP…PPAP), 663 to 673 (PAPPPPPPPPR), 688 to 699 (GPPPPPPPPLPP), 709 to 721 (PSAP…PPPA), 729 to 739 (APAPPLPPPLP), and 762 to 784 (PAPP…PPPL). Residues 827–1226 (QQSNPPKKAS…KLEKDKEKAT (400 aa)) enclose the FH2 domain.

It belongs to the formin-like family. Class-II subfamily.

This is Formin-like protein 3 (FH3) from Oryza sativa subsp. japonica (Rice).